A 535-amino-acid polypeptide reads, in one-letter code: Unconventional prefoldin RPB5 interactor 1 (535 aa).

Met-1 is modified (N-acetylmethionine). Disordered regions lie at residues 1 to 23 (MEAP…PALV), 223 to 330 (LLGE…VGDN), 352 to 383 (KNTT…QELP), and 412 to 431 (SRSR…AAEF). Pro residues predominate over residues 7–18 (ETPPDPSPPSAP). Polar residues-rich tracts occupy residues 253-265 (TNVN…TDSH) and 276-296 (EPFS…SSSY). The segment covering 299-320 (DDDDDDDDDDDDDNIDDDDGDN) has biased composition (acidic residues). Phosphoserine; by RPS6KB1 is present on Ser-372. Phosphothreonine is present on Thr-373. Positions 417 to 427 (NSVCSDTSESS) are enriched in polar residues. Position 442 is a phosphoserine (Ser-442).

It belongs to the RNA polymerase II subunit 5-mediating protein family. As to quaternary structure, homodimer. Component of the PAQosome complex which is responsible for the biogenesis of several protein complexes and which consists of R2TP complex members RUVBL1, RUVBL2, RPAP3 and PIH1D1, URI complex members PFDN2, PFDN6, PDRG1, UXT and URI1 as well as ASDURF, POLR2E and DNAAF10/WDR92. Interacts with POLR2E/RPB5, RUVBL2 and RUVBL1. Interacts with PFDN2, PFDN4 and STAP1; the interactions are phosphorylation-dependent and occur in a growth-dependent manner in the mitochondrion. Interacts with UXT. Interacts with PPP1CC; the interaction is phosphorylation-dependent and occurs in a growth factor-dependent manner. Interacts (via the middle C-terminal region) with GTF2F1 and GTF2F2. Interacts with DMAP1. Interacts with TSC1 and TSC2. Interacts with PRPF8 and EFTUD2 in a ZNHIT2-dependent manner. Post-translationally, phosphorylated. Phosphorylation occurs essentially on serine residues. Phosphorylation occurs in response to androgen treatment in prostate cancer cells in a mTOR-dependent manner. Phosphorylated; hyperhosphorylated in mitochondria in a mTORC-dependent signaling pathway. Phosphorylated at Ser-372 by RPS6KB1 in a growth factor- and rapamycin-dependent manner. S6K1-mediated mitochondrial phosphorylation at Ser-372 disrupts the URI1-PPP1CC complex in the mitochondrion, relieves PPP1CC phosphatase inhibition activity and hence engages a negative feedback diminishing RPS6KB1 kinase activity, preventing sustained S6K1-dependent signaling. In terms of tissue distribution, ubiquitous. Expressed in ovarian cancers (at protein level). Expressed strongly in skeletal muscle. Expressed weakly in brain, heart, pancreas and in prostate epithelial cells.

The protein resides in the nucleus. It is found in the cytoplasm. It localises to the mitochondrion. The protein localises to the cell projection. Its subcellular location is the dendrite. Functionally, involved in gene transcription regulation. Acts as a transcriptional repressor in concert with the corepressor UXT to regulate androgen receptor (AR) transcription. May act as a tumor suppressor to repress AR-mediated gene transcription and to inhibit anchorage-independent growth in prostate cancer cells. Required for cell survival in ovarian cancer cells. Together with UXT, associates with chromatin to the NKX3-1 promoter region. Antagonizes transcriptional modulation via hepatitis B virus X protein. Plays a central role in maintaining S6K1 signaling and BAD phosphorylation under normal growth conditions thereby protecting cells from potential deleterious effects of sustained S6K1 signaling. The URI1-PPP1CC complex acts as a central component of a negative feedback mechanism that counteracts excessive S6K1 survival signaling to BAD in response to growth factors. Mediates inhibition of PPP1CC phosphatase activity in mitochondria. Coordinates the regulation of nutrient-sensitive gene expression availability in a mTOR-dependent manner. Seems to be a scaffolding protein able to assemble a prefoldin-like complex that contains PFDs and proteins with roles in transcription and ubiquitination. This is Unconventional prefoldin RPB5 interactor 1 (URI1) from Homo sapiens (Human).